The primary structure comprises 64 residues: Translational regulator CsrA 1 (64 aa).

It belongs to the CsrA/RsmA family. As to quaternary structure, homodimer; the beta-strands of each monomer intercalate to form a hydrophobic core, while the alpha-helices form wings that extend away from the core.

Its subcellular location is the cytoplasm. A key translational regulator that binds mRNA to regulate translation initiation and/or mRNA stability. Mediates global changes in gene expression, shifting from rapid growth to stress survival by linking envelope stress, the stringent response and the catabolite repression systems. Usually binds in the 5'-UTR; binding at or near the Shine-Dalgarno sequence prevents ribosome-binding, repressing translation, binding elsewhere in the 5'-UTR can activate translation and/or stabilize the mRNA. Its function is antagonized by small RNA(s). The protein is Translational regulator CsrA 1 of Pseudomonas syringae pv. tomato (strain ATCC BAA-871 / DC3000).